A 173-amino-acid polypeptide reads, in one-letter code: Large ribosomal subunit protein uL10 (173 aa).

The protein belongs to the universal ribosomal protein uL10 family. Part of the ribosomal stalk of the 50S ribosomal subunit. The N-terminus interacts with L11 and the large rRNA to form the base of the stalk. The C-terminus forms an elongated spine to which L12 dimers bind in a sequential fashion forming a multimeric L10(L12)X complex.

Functionally, forms part of the ribosomal stalk, playing a central role in the interaction of the ribosome with GTP-bound translation factors. This Christiangramia forsetii (strain DSM 17595 / CGMCC 1.15422 / KT0803) (Gramella forsetii) protein is Large ribosomal subunit protein uL10.